A 210-amino-acid polypeptide reads, in one-letter code: Inner membrane-spanning protein YciB (210 aa).

6 helical membrane passes run 19-39 (LVLE…GDWL), 53-73 (IFIA…VSWI), 78-98 (LPMM…LTLW), 115-135 (LFGA…GYVF), 148-168 (KLTI…EIVW), and 175-195 (FWVA…TLAQ).

This sequence belongs to the YciB family.

The protein localises to the cell inner membrane. In terms of biological role, plays a role in cell envelope biogenesis, maintenance of cell envelope integrity and membrane homeostasis. The sequence is that of Inner membrane-spanning protein YciB from Sinorhizobium fredii (strain NBRC 101917 / NGR234).